A 239-amino-acid polypeptide reads, in one-letter code: Orotidine 5'-phosphate decarboxylase (239 aa).

Substrate is bound by residues aspartate 11, lysine 33, 60–69 (DLKCHDIPTT), threonine 123, arginine 185, glutamine 194, glycine 214, and arginine 215. Residue lysine 62 is the Proton donor of the active site.

This sequence belongs to the OMP decarboxylase family. Type 1 subfamily. As to quaternary structure, homodimer.

It catalyses the reaction orotidine 5'-phosphate + H(+) = UMP + CO2. Its pathway is pyrimidine metabolism; UMP biosynthesis via de novo pathway; UMP from orotate: step 2/2. Catalyzes the decarboxylation of orotidine 5'-monophosphate (OMP) to uridine 5'-monophosphate (UMP). This chain is Orotidine 5'-phosphate decarboxylase, found in Bacillus licheniformis (strain ATCC 14580 / DSM 13 / JCM 2505 / CCUG 7422 / NBRC 12200 / NCIMB 9375 / NCTC 10341 / NRRL NRS-1264 / Gibson 46).